Reading from the N-terminus, the 245-residue chain is DNA polymerase sliding clamp (245 aa).

This sequence belongs to the PCNA family. In terms of assembly, homotrimer. The subunits circularize to form a toroid; DNA passes through its center. Replication factor C (RFC) is required to load the toroid on the DNA.

Its function is as follows. Sliding clamp subunit that acts as a moving platform for DNA processing. Responsible for tethering the catalytic subunit of DNA polymerase and other proteins to DNA during high-speed replication. This chain is DNA polymerase sliding clamp, found in Methanosarcina mazei (strain ATCC BAA-159 / DSM 3647 / Goe1 / Go1 / JCM 11833 / OCM 88) (Methanosarcina frisia).